The chain runs to 309 residues: Vacuolar membrane protein YOR292C (309 aa).

At Met-1 to Arg-52 the chain is on the vacuolar side. Asn-19 is a glycosylation site (N-linked (GlcNAc...) asparagine). The helical transmembrane segment at Ile-53 to Ser-73 threads the bilayer. Residues His-74–Asn-81 lie on the Cytoplasmic side of the membrane. The chain crosses the membrane as a helical span at residues Ser-82–Ala-102. Residues Gln-103 to Trp-183 are Vacuolar-facing. Asn-121 carries an N-linked (GlcNAc...) asparagine glycan. A helical membrane pass occupies residues Gly-184–Leu-204. At Asn-205–Gln-225 the chain is on the cytoplasmic side. A helical transmembrane segment spans residues Leu-226 to Gly-246. Over Gly-247 to Tyr-260 the chain is Vacuolar. A helical transmembrane segment spans residues Ile-261–Ile-281. Residues Met-282–Lys-309 lie on the Cytoplasmic side of the membrane.

Belongs to the peroxisomal membrane protein PXMP2/4 family. Post-translationally, N-glycosylated.

It localises to the vacuole membrane. The chain is Vacuolar membrane protein YOR292C from Saccharomyces cerevisiae (strain ATCC 204508 / S288c) (Baker's yeast).